Here is a 100-residue protein sequence, read N- to C-terminus: Cell division protein DrpB (100 aa).

At 1 to 16 (MEYGSTKMEERLSRSP) the chain is on the cytoplasmic side. Residues 17–37 (GGKLALWAFYTWCGYFVWAMA) traverse the membrane as a helical segment. Residues 38–64 (RYIWVMSRIPDAPVSGFESDLGSTAGK) lie on the Periplasmic side of the membrane. Residues 65–85 (WLGALVGFLFMALVGALLGSI) traverse the membrane as a helical segment. Residues 86 to 100 (AWYTRPRPARSRRYE) lie on the Cytoplasmic side of the membrane.

It belongs to the DrpB family. Bacterial adenylate cyclase hybrid (BACTH) studies show interaction of this protein with DamX, FtsI, FtsN, FtsQ, YmgF, DedD, FtsA and MalF, as well as weaker interactions with DedD, MalG and PBP2, but this assay often generates false positive results.

The protein localises to the cell inner membrane. Functionally, a non-essential division protein that localizes to the septal ring in low ionic strength medium. In terms of biological role, localizes to the septal ring in about 30% of observed cells before cell constriction occurs; localization occurs in low ionic strength medium (0 NaCl) and requires FtsZ but not FtsEX. Overexpression partially restores correct FtsI localization to the division septum in an ftsEX deletion. Isolated as a multicopy suppressor of an ftsEX deletion mutant; it does not suppress other cell division defects (e.g. ftsA, ftsI, ftsQ or ftsZ). In Escherichia coli (strain K12), this protein is Cell division protein DrpB.